A 334-amino-acid chain; its full sequence is L-lactate dehydrogenase C chain (334 aa).

NAD(+) contacts are provided by residues 30–58 (GQVGMACAVTILLRELADELALVDVVEDK) and Arg-100. The substrate site is built by Arg-107, Asn-139, and Arg-170. Position 139 (Asn-139) interacts with NAD(+). The Proton acceptor role is filled by His-194. A substrate-binding site is contributed by Thr-249.

This sequence belongs to the LDH/MDH superfamily. LDH family. Homotetramer. As to expression, eye and liver.

The protein localises to the cytoplasm. The catalysed reaction is (S)-lactate + NAD(+) = pyruvate + NADH + H(+). Its pathway is fermentation; pyruvate fermentation to lactate; (S)-lactate from pyruvate: step 1/1. In Fundulus heteroclitus (Killifish), this protein is L-lactate dehydrogenase C chain (ldhc).